The chain runs to 345 residues: MKGELLLFSSVIVLLQVVCSCPDKCYCQSSTNFVDCSQQGLAEIPSHLPPQTRTLHLQDNQIHHLPAFAFRSVPWLMTLNLSNNSLSNLAPGAFHGLQHLQVLNLTQNSLLSLESRLFHSLPQLRELDLSSNNISHLPTSLGETWENLTILAVQQNQLQQLDRALLESMPSVRLLLLKDNLWKCNCHLLGLKLWLEKFVYKGGLTDGIICESPDTWKGKDLLRIPHELYQPCPLPAPDPVSSQAQWPGSAHGVVLRPPENHNAGERELLECELKPKPRPANLRHAIATVIITGVVCGIVCLMMLAAAIYGCTYAAITAQYHGGPLAQTNDPGKVEEKERFDSSPA.

The first 27 residues, Met1–Cys27, serve as a signal peptide directing secretion. The region spanning Gln28 to Pro50 is the LRRNT domain. Over Gln28 to Thr288 the chain is Extracellular. 5 LRR repeats span residues Gln51–Ser72, Trp75–Gly96, His99–Ser120, Gln123–Thr144, and Asn147–Ser168. Asn104 is a glycosylation site (N-linked (GlcNAc...) asparagine). Asn147 carries N-linked (GlcNAc...) asparagine glycosylation. Positions Asn180–Leu234 constitute an LRRCT domain. The chain crosses the membrane as a helical span at residues Val289–Tyr309. The Cytoplasmic segment spans residues Gly310–Ala345. Residues Ala326–Ala345 form a disordered region. Basic and acidic residues predominate over residues Gly332–Ala345.

The protein resides in the membrane. This chain is Leucine-rich repeat and transmembrane domain-containing protein 1 (LRTM1), found in Homo sapiens (Human).